The following is a 104-amino-acid chain: MSEFSGVTVVREANIYFNGAVASHTVLFPDGSKKTLGIMQPGEYTFSTGAAELMEILSGELDLQLAGETGWRRIGGGQSFEVPANSSFTMKVQTVSDYCCSFLS.

It belongs to the nucleoside phosphorylase PpnP family.

The enzyme catalyses a purine D-ribonucleoside + phosphate = a purine nucleobase + alpha-D-ribose 1-phosphate. The catalysed reaction is adenosine + phosphate = alpha-D-ribose 1-phosphate + adenine. It carries out the reaction cytidine + phosphate = cytosine + alpha-D-ribose 1-phosphate. It catalyses the reaction guanosine + phosphate = alpha-D-ribose 1-phosphate + guanine. The enzyme catalyses inosine + phosphate = alpha-D-ribose 1-phosphate + hypoxanthine. The catalysed reaction is thymidine + phosphate = 2-deoxy-alpha-D-ribose 1-phosphate + thymine. It carries out the reaction uridine + phosphate = alpha-D-ribose 1-phosphate + uracil. It catalyses the reaction xanthosine + phosphate = alpha-D-ribose 1-phosphate + xanthine. Its function is as follows. Catalyzes the phosphorolysis of diverse nucleosides, yielding D-ribose 1-phosphate and the respective free bases. Can use uridine, adenosine, guanosine, cytidine, thymidine, inosine and xanthosine as substrates. Also catalyzes the reverse reactions. The protein is Pyrimidine/purine nucleoside phosphorylase of Trichlorobacter lovleyi (strain ATCC BAA-1151 / DSM 17278 / SZ) (Geobacter lovleyi).